A 505-amino-acid polypeptide reads, in one-letter code: Probable cytosol aminopeptidase (505 aa).

Positions 268 and 273 each coordinate Mn(2+). Lys280 is an active-site residue. The Mn(2+) site is built by Asp291, Asp350, and Glu352. The active site involves Arg354.

Belongs to the peptidase M17 family. It depends on Mn(2+) as a cofactor.

It localises to the cytoplasm. The enzyme catalyses Release of an N-terminal amino acid, Xaa-|-Yaa-, in which Xaa is preferably Leu, but may be other amino acids including Pro although not Arg or Lys, and Yaa may be Pro. Amino acid amides and methyl esters are also readily hydrolyzed, but rates on arylamides are exceedingly low.. It carries out the reaction Release of an N-terminal amino acid, preferentially leucine, but not glutamic or aspartic acids.. Its function is as follows. Presumably involved in the processing and regular turnover of intracellular proteins. Catalyzes the removal of unsubstituted N-terminal amino acids from various peptides. The protein is Probable cytosol aminopeptidase of Syntrophobacter fumaroxidans (strain DSM 10017 / MPOB).